The sequence spans 103 residues: Putative double-stranded DNA mimic protein HAPS_1002 (103 aa).

The protein belongs to the putative dsDNA mimic protein family.

Functionally, may act as a double-stranded DNA (dsDNA) mimic. Probably regulates the activity of a dsDNA-binding protein. The polypeptide is Putative double-stranded DNA mimic protein HAPS_1002 (Glaesserella parasuis serovar 5 (strain SH0165) (Haemophilus parasuis)).